We begin with the raw amino-acid sequence, 231 residues long: Trypsin-2 (231 aa).

The signal sequence occupies residues 1–4; it reads AAFA. A propeptide spans 5–9 (activation peptide); the sequence is TEDDK. One can recognise a Peptidase S1 domain in the interval 10–229; it reads IVGGYECKAY…FNDWLTSTMA (220 aa). 6 disulfide bridges follow: cysteine 16–cysteine 145, cysteine 34–cysteine 50, cysteine 118–cysteine 218, cysteine 125–cysteine 191, cysteine 156–cysteine 170, and cysteine 181–cysteine 205. The active-site Charge relay system is the histidine 49. Ca(2+)-binding residues include glutamate 61, asparagine 63, valine 66, and glutamate 71. Residue aspartate 93 is the Charge relay system of the active site. Serine 185 (charge relay system) is an active-site residue.

Belongs to the peptidase S1 family. Requires Ca(2+) as cofactor.

It localises to the secreted. The protein localises to the extracellular space. The enzyme catalyses Preferential cleavage: Arg-|-Xaa, Lys-|-Xaa.. In Salmo salar (Atlantic salmon), this protein is Trypsin-2.